We begin with the raw amino-acid sequence, 456 residues long: N(6)-adenosine-methyltransferase non-catalytic subunit METTL14 (456 aa).

A compositionally biased stretch (basic and acidic residues) spans 39–51; it reads DEQREIAETRETS. The disordered stretch occupies residues 39–74; that stretch reads DEQREIAETRETSRASYDTSATVSKRKMPEEGEADE. Residues 52–61 are compositionally biased toward polar residues; the sequence is RASYDTSATV. Interaction with METTL3 regions lie at residues 135-136 and 237-238; these read RD and SG. The interval 245–254 is positively charged region required for RNA-binding; it reads RMCLRKWGFR. Interaction with METTL3 regions lie at residues 255–258 and 278–287; these read RSED and KAIFQRTKEH. The tract at residues 297-298 is positively charged region required for RNA-binding; sequence HR. Residues 308–312 form an interaction with METTL3 region; sequence NVDID. The disordered stretch occupies residues 395–456; that stretch reads LRPKTPPPKS…GPHRGVFAPR (62 aa). The span at 410–421 shows a compositional bias: gly residues; sequence ASRGGGRGGPSA. Residues 423–441 are compositionally biased toward basic and acidic residues; the sequence is RGERGRERNRGSFRGDRGN.

The protein belongs to the MT-A70-like family. As to quaternary structure, heterodimer; heterodimerizes with mettl3 to form an antiparallel heterodimer that constitutes an active methyltransferase. Component of the WMM complex, a N6-methyltransferase complex composed of a catalytic subcomplex, named MAC, and of an associated subcomplex, named MACOM. The MAC subcomplex is composed of mettl3 and mettl14.

The protein localises to the nucleus. Functionally, the METTL3-METTL14 heterodimer forms a N6-methyltransferase complex that methylates adenosine residues at the N(6) position of some mRNAs and regulates the circadian clock, differentiation of embryonic stem cells and cortical neurogenesis. In the heterodimer formed with mettl3, mettl14 constitutes the RNA-binding scaffold that recognizes the substrate rather than the catalytic core. N6-methyladenosine (m6A), which takes place at the 5'-[AG]GAC-3' consensus sites of some mRNAs, plays a role in mRNA stability and processing. The chain is N(6)-adenosine-methyltransferase non-catalytic subunit METTL14 (mettl14) from Xenopus tropicalis (Western clawed frog).